We begin with the raw amino-acid sequence, 439 residues long: COBRA-like protein 7 (439 aa).

The N-terminal stretch at 1–22 (MDVDQLILFVFVCCLSSRFADA) is a signal peptide. 6 N-linked (GlcNAc...) asparagine glycosylation sites follow: N138, N181, N186, N232, N312, and N346. N412 is lipidated: GPI-anchor amidated asparagine. Positions 413–439 (GGPDSRVSAAQLIASSCLLLPFIFLIM) are cleaved as a propeptide — removed in mature form.

It belongs to the COBRA family.

It is found in the cell membrane. Involved in determining the orientation of cell expansion, probably by playing an important role in cellulose deposition. May act by recruiting cellulose synthesizing complexes to discrete positions on the cell surface. The chain is COBRA-like protein 7 (BC1LP1) from Oryza sativa subsp. japonica (Rice).